The sequence spans 166 residues: Anaerobic nitrite reductase NSHB1 (166 aa).

The region spanning 13–163 (SFSEEQEALV…LVAAIKQEMK (151 aa)) is the Globin domain. The short motif at 46–50 (EVAPS) is the Homodimerization element. Residues Ser56, Lys70, His74, Arg104, Thr108, and His109 each coordinate heme b. A Homodimerization motif is present at residues 116–128 (DAHFEVVKFALLD).

It belongs to the plant globin family. Homodimer. The cofactor is heme b. In terms of tissue distribution, expressed in coleoptiles, embryos, leaves, seminal roots and roots.

Its subcellular location is the cytoplasm. The protein localises to the nucleus. The catalysed reaction is Fe(III)-heme b-[protein] + nitric oxide + H2O = Fe(II)-heme b-[protein] + nitrite + 2 H(+). Slowly reduced by ascorbic acid (AA); this reaction may become a source of nitric oxide (NO) during hypoxia. Its function is as follows. Phytoglobin that reduces nitrite to nitric oxide under anoxic conditions (e.g. during flooding or in waterlogged soil). May not function as an oxygen storage or transport protein. Has an unusually high affinity for O(2) through a hexacoordinate heme iron because of a very low dissociation constant. This Oryza sativa subsp. japonica (Rice) protein is Anaerobic nitrite reductase NSHB1.